A 966-amino-acid chain; its full sequence is Protein STICHEL-like 4 (966 aa).

Disordered stretches follow at residues 64–118 and 200–237; these read RSLR…DRSS and RDNA…REQN. A compositionally biased stretch (basic and acidic residues) spans 75-84; sequence LKEDHQDSRE. The segment covering 98 to 108 has biased composition (polar residues); the sequence is PIVSFGTSKVT. Over residues 109–118 the composition is skewed to basic and acidic residues; it reads PSDEKFDRSS. Positions 208-217 are enriched in polar residues; sequence SEMSIASNSV. Residues 219-236 show a composition bias toward basic and acidic residues; the sequence is RGEKYEGEEGGGGRDREQ. An ATP-binding site is contributed by 384–391; that stretch reads GPNGTGKT. Residues Cys-403, Cys-412, Cys-415, and Cys-418 each contribute to the Zn(2+) site. A coiled-coil region spans residues 650-678; it reads SKEDMEKLKQALKTLSESEKQLRVSNDKL. Positions 706-717 are enriched in polar residues; that stretch reads FNHTPLTDSDPS. The interval 706–733 is disordered; it reads FNHTPLTDSDPSNHVVAGTRRDDSKQGF.

This sequence belongs to the DnaX/STICHEL family.

The sequence is that of Protein STICHEL-like 4 from Arabidopsis thaliana (Mouse-ear cress).